A 173-amino-acid polypeptide reads, in one-letter code: PRKR-interacting protein 1 homolog (173 aa).

Disordered stretches follow at residues 1–59 (MAKE…PRSA) and 117–173 (MLEE…LEDQ). Residues 26 to 42 (ATDEQRLKLERLMRNPD) are compositionally biased toward basic and acidic residues. The tract at residues 50 to 142 (RPKEWSPRSA…LKEKKKMCKK (93 aa)) is required for RNA-binding. A coiled-coil region spans residues 99–150 (SEKQRLDEEYKKKLIQNKMLEEERTAKRRLKRQKLKEKKKMCKKGKKEEKKE). A compositionally biased stretch (basic residues) spans 124 to 143 (AKRRLKRQKLKEKKKMCKKG). The required for nuclear localization stretch occupies residues 125-137 (KRRLKRQKLKEKK). Basic and acidic residues predominate over residues 144 to 173 (KKEEKKEDKDGHTDPENSAESSDKSDLEDQ).

Belongs to the PRKRIP1 family. Component of the pre-catalytic and post-catalytic spliceosome complexes.

It localises to the nucleus. The protein localises to the nucleolus. In terms of biological role, required for pre-mRNA splicing as component of the spliceosome. Binds double-stranded RNA. This chain is PRKR-interacting protein 1 homolog (prkrip1), found in Xenopus laevis (African clawed frog).